The following is a 349-amino-acid chain: Anthranilate phosphoribosyltransferase (349 aa).

Residues G82, G85–D86, N92–S95, K110–G118, and S122 each bind 5-phospho-alpha-D-ribose 1-diphosphate. Residue G82 participates in anthranilate binding. S94 is a Mg(2+) binding site. N113 contacts anthranilate. Residue R168 participates in anthranilate binding. Mg(2+) contacts are provided by D227 and E228.

Belongs to the anthranilate phosphoribosyltransferase family. Homodimer. Mg(2+) is required as a cofactor.

The enzyme catalyses N-(5-phospho-beta-D-ribosyl)anthranilate + diphosphate = 5-phospho-alpha-D-ribose 1-diphosphate + anthranilate. It functions in the pathway amino-acid biosynthesis; L-tryptophan biosynthesis; L-tryptophan from chorismate: step 2/5. In terms of biological role, catalyzes the transfer of the phosphoribosyl group of 5-phosphorylribose-1-pyrophosphate (PRPP) to anthranilate to yield N-(5'-phosphoribosyl)-anthranilate (PRA). The sequence is that of Anthranilate phosphoribosyltransferase from Pseudomonas aeruginosa (strain LESB58).